We begin with the raw amino-acid sequence, 635 residues long: Cytoplasmic polyadenylation element-binding protein 4 (635 aa).

3 disordered regions span residues 1-70, 149-284, and 337-369; these read MQDD…TLRL, GFGG…GFNT, and LFPMEDERSYGEDERSDQSLSGLGSPHSFPHQN. The span at 14–30 shows a compositional bias: polar residues; the sequence is PQLQQESQEGQDKQTLS. A compositionally biased stretch (basic residues) spans 166 to 182; the sequence is PSPHPHFQHPHNQHRRS. Residues 216–231 show a composition bias toward low complexity; that stretch reads GSYQSPSSTPSSTSWS. Over residues 232–241 the composition is skewed to gly residues; it reads PGGGYGGWGS. The span at 254–283 shows a compositional bias: polar residues; that stretch reads PLNSISPLKKSFPNNQTQTQKYPRNNSGFN. Residues 341–353 are compositionally biased toward basic and acidic residues; the sequence is EDERSYGEDERSD. RRM domains are found at residues 378–469 and 486–568; these read RKVF…PWNL and KTIF…PYVL.

This sequence belongs to the RRM CPEB family.

The protein localises to the cytoplasm. Its subcellular location is the cell projection. It is found in the dendrite. It localises to the dendritic spine. The protein resides in the postsynaptic density. The protein localises to the axon. Its subcellular location is the growth cone. It is found in the endoplasmic reticulum. It localises to the perinuclear region. Its function is as follows. Sequence-specific RNA-binding protein that binds to the cytoplasmic polyadenylation element (CPE), an uridine-rich sequence element (consensus sequence 5'-UUUUUAU-3') within the mRNA 3'-UTR. RNA binding results in a clear conformational change analogous to the Venus fly trap mechanism. The protein is Cytoplasmic polyadenylation element-binding protein 4 (cpeb4) of Danio rerio (Zebrafish).